The chain runs to 190 residues: Pyridoxal 5'-phosphate synthase subunit PdxT (190 aa).

46 to 48 (GES) contacts L-glutamine. Residue cysteine 78 is the Nucleophile of the active site. L-glutamine is bound by residues arginine 105 and 134–135 (IR). Active-site charge relay system residues include histidine 170 and glutamate 172.

This sequence belongs to the glutaminase PdxT/SNO family. As to quaternary structure, in the presence of PdxS, forms a dodecamer of heterodimers. Only shows activity in the heterodimer.

It carries out the reaction aldehydo-D-ribose 5-phosphate + D-glyceraldehyde 3-phosphate + L-glutamine = pyridoxal 5'-phosphate + L-glutamate + phosphate + 3 H2O + H(+). The catalysed reaction is L-glutamine + H2O = L-glutamate + NH4(+). Its pathway is cofactor biosynthesis; pyridoxal 5'-phosphate biosynthesis. In terms of biological role, catalyzes the hydrolysis of glutamine to glutamate and ammonia as part of the biosynthesis of pyridoxal 5'-phosphate. The resulting ammonia molecule is channeled to the active site of PdxS. This Clostridium beijerinckii (strain ATCC 51743 / NCIMB 8052) (Clostridium acetobutylicum) protein is Pyridoxal 5'-phosphate synthase subunit PdxT.